The chain runs to 426 residues: 5-methylthioadenosine/S-adenosylhomocysteine deaminase (426 aa).

Zn(2+)-binding residues include His-60 and His-62. Substrate contacts are provided by Glu-89 and His-179. His-206 contributes to the Zn(2+) binding site. Substrate contacts are provided by Glu-209 and Asp-294. Zn(2+) is bound at residue Asp-294.

Belongs to the metallo-dependent hydrolases superfamily. MTA/SAH deaminase family. Requires Zn(2+) as cofactor.

The catalysed reaction is S-adenosyl-L-homocysteine + H2O + H(+) = S-inosyl-L-homocysteine + NH4(+). It carries out the reaction S-methyl-5'-thioadenosine + H2O + H(+) = S-methyl-5'-thioinosine + NH4(+). Catalyzes the deamination of 5-methylthioadenosine and S-adenosyl-L-homocysteine into 5-methylthioinosine and S-inosyl-L-homocysteine, respectively. Is also able to deaminate adenosine. This is 5-methylthioadenosine/S-adenosylhomocysteine deaminase from Dictyoglomus thermophilum (strain ATCC 35947 / DSM 3960 / H-6-12).